The chain runs to 352 residues: Quinolinate synthase (352 aa).

2 residues coordinate iminosuccinate: histidine 48 and serine 69. [4Fe-4S] cluster is bound at residue cysteine 114. Residues 140–142 (YAN) and serine 157 each bind iminosuccinate. Residue cysteine 201 participates in [4Fe-4S] cluster binding. Residues 227 to 229 (HPE) and threonine 244 each bind iminosuccinate. Position 298 (cysteine 298) interacts with [4Fe-4S] cluster.

The protein belongs to the quinolinate synthase family. Type 1 subfamily. It depends on [4Fe-4S] cluster as a cofactor.

It is found in the cytoplasm. It carries out the reaction iminosuccinate + dihydroxyacetone phosphate = quinolinate + phosphate + 2 H2O + H(+). It functions in the pathway cofactor biosynthesis; NAD(+) biosynthesis; quinolinate from iminoaspartate: step 1/1. Catalyzes the condensation of iminoaspartate with dihydroxyacetone phosphate to form quinolinate. In Pseudomonas syringae pv. tomato (strain ATCC BAA-871 / DC3000), this protein is Quinolinate synthase.